We begin with the raw amino-acid sequence, 497 residues long: Pancreatic alpha-amylase (497 aa).

Pyrrolidone carboxylic acid is present on Q1. 3 disulfides stabilise this stretch: C28-C86, C70-C115, and C141-C160. Residues N100, R158, and D167 each coordinate Ca(2+). R195 serves as a coordination point for chloride. D197 acts as the Nucleophile in catalysis. H201 provides a ligand contact to Ca(2+). E233 functions as the Proton donor in the catalytic mechanism. Residues N298 and R337 each coordinate chloride. 2 disulfides stabilise this stretch: C379–C385 and C451–C463.

Belongs to the glycosyl hydrolase 13 family. Monomer. Ca(2+) serves as cofactor. Chloride is required as a cofactor.

The protein resides in the secreted. Its subcellular location is the extracellular space. The catalysed reaction is Endohydrolysis of (1-&gt;4)-alpha-D-glucosidic linkages in polysaccharides containing three or more (1-&gt;4)-alpha-linked D-glucose units.. The sequence is that of Pancreatic alpha-amylase from Struthio camelus (Common ostrich).